The chain runs to 220 residues: Ribose-5-phosphate isomerase A (220 aa).

Substrate-binding positions include 28–31, 81–84, and 94–97; these read TGST, DGAD, and KGGG. Glu-103 acts as the Proton acceptor in catalysis. Lys-121 lines the substrate pocket.

The protein belongs to the ribose 5-phosphate isomerase family. In terms of assembly, homodimer.

The catalysed reaction is aldehydo-D-ribose 5-phosphate = D-ribulose 5-phosphate. The protein operates within carbohydrate degradation; pentose phosphate pathway; D-ribose 5-phosphate from D-ribulose 5-phosphate (non-oxidative stage): step 1/1. In terms of biological role, catalyzes the reversible conversion of ribose-5-phosphate to ribulose 5-phosphate. The sequence is that of Ribose-5-phosphate isomerase A from Yersinia enterocolitica serotype O:8 / biotype 1B (strain NCTC 13174 / 8081).